Here is a 201-residue protein sequence, read N- to C-terminus: Peptidyl-tRNA hydrolase (201 aa).

Tyr17 serves as a coordination point for tRNA. The active-site Proton acceptor is the His22. TRNA is bound by residues Phe76, Asn78, and Asn124.

This sequence belongs to the PTH family. Monomer.

It is found in the cytoplasm. The enzyme catalyses an N-acyl-L-alpha-aminoacyl-tRNA + H2O = an N-acyl-L-amino acid + a tRNA + H(+). Its function is as follows. Hydrolyzes ribosome-free peptidyl-tRNAs (with 1 or more amino acids incorporated), which drop off the ribosome during protein synthesis, or as a result of ribosome stalling. Catalyzes the release of premature peptidyl moieties from peptidyl-tRNA molecules trapped in stalled 50S ribosomal subunits, and thus maintains levels of free tRNAs and 50S ribosomes. This chain is Peptidyl-tRNA hydrolase, found in Oleidesulfovibrio alaskensis (strain ATCC BAA-1058 / DSM 17464 / G20) (Desulfovibrio alaskensis).